The chain runs to 381 residues: MALKAKGAAALDCFEVTLKCEEGDDDDEAVVVAVIPRPEPMLRVTQQEKTPPPRPNLLEAGVEGCEELKQQVSWEQEFLVGNSPGGSGRALCMVCGAEIRSPSADTARAHILEQHPHTLDLSPSEKSNILEAWSEGVALLQDIQADQPSLPSLESGQDGQPDPISNPDPVRMPAEIVVLLDSEDNPSLPKRLRPRGLRPLELPVTPVIEQGNKKPRGQRWKESPENEPARKKRSRHMTKILDPDPDPPSPESPTETFAAPAEVRHFTDGSFPPGFVLQLFSHTQLRTTDCKDSSKDSRAAEGLPQPQNPSSASPPGLRGTLDLQVIRVRMEEPPAVSLLQDWSKHPQGTKGVGTGDKPDWPTVLSESSATVKGQPKAGSGV.

Residue Lys49 forms a Glycyl lysine isopeptide (Lys-Gly) (interchain with G-Cter in SUMO2) linkage. A phosphoserine mark is found at Ser122 and Ser149. Residues 148–158 (PSLPSLESGQD) are compositionally biased toward polar residues. Positions 148–170 (PSLPSLESGQDGQPDPISNPDPV) are disordered. Residues Lys190 and Lys221 each participate in a glycyl lysine isopeptide (Lys-Gly) (interchain with G-Cter in SUMO2) cross-link. Disordered regions lie at residues 203–270 (PVTP…TDGS), 285–320 (LRTT…LRGT), and 335–381 (AVSL…GSGV). Over residues 219–229 (RWKESPENEPA) the composition is skewed to basic and acidic residues. Ser249 and Ser252 each carry phosphoserine. Positions 288–299 (TDCKDSSKDSRA) are enriched in basic and acidic residues. Residues Lys291 and Lys295 each participate in a glycyl lysine isopeptide (Lys-Gly) (interchain with G-Cter in SUMO2) cross-link. The segment covering 304–315 (PQPQNPSSASPP) has biased composition (low complexity). Phosphoserine is present on residues Ser310 and Ser313.

As to quaternary structure, interacts with SPIN1, SPIN2A, SPIN2B, SPIN3 and SPIN4. Interacts with TCF7L2 in a SPIN1-dependent manner. Interacts with PARP1; promoting PARP1 ADP-ribosyltransferase activity.

It is found in the nucleus. It localises to the chromosome. Chromatin protein that stabilizes SPIN1 and enhances its association with histone H3 trimethylated at both 'Lys-4' and 'Lys-9' (H3K4me3K9me3). Positively regulates poly-ADP-ribosylation in response to DNA damage; acts by facilitating PARP1 ADP-ribosyltransferase activity. This chain is Spindlin interactor and repressor of chromatin-binding protein, found in Mus musculus (Mouse).